A 192-amino-acid chain; its full sequence is Outer-membrane lipoprotein LolB (192 aa).

The first 17 residues, 1-17 (MTYRTLCILAFTALISA), serve as a signal peptide directing secretion. A lipid anchor (N-palmitoyl cysteine) is attached at Cys18. Cys18 is lipidated: S-diacylglycerol cysteine.

Belongs to the LolB family. Monomer.

It localises to the cell outer membrane. Plays a critical role in the incorporation of lipoproteins in the outer membrane after they are released by the LolA protein. This chain is Outer-membrane lipoprotein LolB, found in Marinomonas sp. (strain MWYL1).